The primary structure comprises 88 residues: Protein WIR1A (88 aa).

At methionine 1–proline 13 the chain is on the cytoplasmic side. Residues threonine 14–cysteine 35 traverse the membrane as a helical segment. At leucine 36–proline 88 the chain is on the extracellular side.

It localises to the membrane. Its function is as follows. Associated with pathogen defense. The sequence is that of Protein WIR1A (WIR1A) from Triticum aestivum (Wheat).